A 783-amino-acid chain; its full sequence is MAKYNTGGNPTEDVSVNSRPFRVTGPNSSSGIQARKNLFNNQGNASPPAGPSNVPKFGSPKPPVAVKPSSEEKPDKEPKPPFLKPTGAGQRFGTPASLTTRDPEAKVGFLKPVGPKPINLPKEDSKPTFPWPPGNKPSLHSVNQDHDLKPLGPKSGPTPPTSENEQKQAFPKLTGVKGKFMSASQDLEPKPLFPKPAFGQKPPLSTENSHEDESPMKNVSSSKGSPAPLGVRSKSGPLKPAREDSENKDHAGEISSLPFPGVVLKPAASRGGPGLSKNGEEKKEDRKIDAAKNTFQSKINQEELASGTPPARFPKAPSKLTVGGPWGQSQEKEKGDKNSATPKQKPLPPLFTLGPPPPKPNRPPNVDLTKFHKTSSGNSTSKGQTSYSTTSLPPPPPSHPASQPPLPASHPSQPPVPSLPPRNIKPPFDLKSPVNEDNQDGVTHSDGAGNLDEEQDSEGETYEDIEASKEREKKREKEEKKRLELEKKEQKEKEKKEQEIKKKFKLTGPIQVIHLAKACCDVKGGKNELSFKQGEQIEIIRITDNPEGKWLGRTARGSYGYIKTTAVEIDYDSLKLKKDSLGAPSRPIEDDQEVYDDVAEQDDISSHSQSGSGGIFPPPPDDDIYDGIEEEDADDGFPAPPKQLDMGDEVYDDVDTSDFPVSSAEMSQGTNVGKAKTEEKDLKKLKKQEKEEKDFRKKFKYDGEIRVLYSTKVTTSITSKKWGTRDLQVKPGESLEVIQTTDDTKVLCRNEEGKYGYVLRSYLADNDGEIYDDIADGCIYDND.

2 stretches are compositionally biased toward polar residues: residues 1 to 18 (MAKY…SVNS) and 25 to 45 (GPNS…QGNA). The interval 1 to 502 (MAKYNTGGNP…KEKKEQEIKK (502 aa)) is disordered. N6-acetyllysine is present on Lys3. Phosphoserine occurs at positions 28 and 46. Basic and acidic residues predominate over residues 69 to 79 (SSEEKPDKEPK). Phosphoserine is present on Ser225. Composition is skewed to basic and acidic residues over residues 240–252 (PARE…DHAG) and 278–290 (NGEE…KIDA). A Phosphoserine modification is found at Ser329. The segment covering 345–363 (KPLPPLFTLGPPPPKPNRP) has biased composition (pro residues). Residues 348 to 448 (PPLFTLGPPP…QDGVTHSDGA (101 aa)) form an interaction with SKAP1 region. Over residues 374-387 (TSSGNSTSKGQTSY) the composition is skewed to polar residues. A compositionally biased stretch (pro residues) spans 392–424 (LPPPPPSHPASQPPLPASHPSQPPVPSLPPRNI). A compositionally biased stretch (acidic residues) spans 451-465 (LDEEQDSEGETYEDI). Residues 456–507 (DSEGETYEDIEASKEREKKREKEEKKRLELEKKEQKEKEKKEQEIKKKFKLT) are a coiled coil. Phosphoserine is present on Ser457. The SH2-binding signature appears at 462–465 (YEDI). A compositionally biased stretch (basic and acidic residues) spans 466-501 (EASKEREKKREKEEKKRLELEKKEQKEKEKKEQEIK). The Nuclear localization signal motif lies at 469 to 505 (KEREKKREKEEKKRLELEKKEQKEKEKKEQEIKKKFK). An SH3 1 domain is found at 511–572 (QVIHLAKACC…KTTAVEIDYD (62 aa)). Residue Tyr571 is modified to Phosphotyrosine. Phosphoserine occurs at positions 573 and 580. An SH2-binding; to LCP2 motif is present at residues 595-598 (YDDV). Positions 598–678 (VAEQDDISSH…GTNVGKAKTE (81 aa)) are disordered. Composition is skewed to acidic residues over residues 620 to 635 (PDDD…DADD) and 646 to 656 (MGDEVYDDVDT). The SH2-binding; to FYN motif lies at 625-628 (YDGI). Tyr651 is modified (phosphotyrosine). The Nuclear localization signal signature appears at 674–700 (KAKTEEKDLKKLKKQEKEEKDFRKKFK). Residues 700 to 768 (KYDGEIRVLY…LRSYLADNDG (69 aa)) form the SH3 2 domain.

As to quaternary structure, part of a complex consisting of SKAP2, FYB1 and PTPNS1. Part of a complex consisting of SKAP2, FYB1 and LILRB3. Part of a complex consisting of SKAP1, FYB1 and CLNK. Interacts with CLNK (via its SH2 domain); this interaction allows SKAP1 and FYB1 to recruit FYN to the complex, thus promoting the phosphorylation of CLNK by FYN. Interacts with FYN. Interacts with LCP2. Interacts with SKAP1. Interacts with SKAP2. Interacts with FASLG. Interacts with EVL. Interacts with TMEM47. Interacts with LCK. T-cell receptor ligation leads to increased tyrosine phosphorylation. As to expression, expressed in hematopoietic tissues such as myeloid and T-cells, spleen and thymus. Not expressed in B-cells, nor in non-lymphoid tissues.

Its subcellular location is the cytoplasm. It localises to the nucleus. The protein resides in the cell junction. In terms of biological role, acts as an adapter protein of the FYN and LCP2 signaling cascades in T-cells. May play a role in linking T-cell signaling to remodeling of the actin cytoskeleton. Modulates the expression of IL2. Involved in platelet activation. Prevents the degradation of SKAP1 and SKAP2. May be involved in high affinity immunoglobulin epsilon receptor signaling in mast cells. The chain is FYN-binding protein 1 from Homo sapiens (Human).